The following is a 29-amino-acid chain: Cyclotide psyleio D (29 aa).

The segment at residues 1-29 is a cross-link (cyclopeptide (Gly-Asp)); that stretch reads GLPVCGESCFGGTCNTPGCSCTWPVCTRD. Cystine bridges form between Cys-5-Cys-19, Cys-9-Cys-21, and Cys-14-Cys-26.

Post-translationally, this is a cyclic peptide.

Functionally, probably participates in a plant defense mechanism. The polypeptide is Cyclotide psyleio D (Psychotria brachyceras).